The sequence spans 1761 residues: Probable serine/threonine-protein kinase DDB_G0282963 (1761 aa).

12 disordered regions span residues 18–47 (PQQQQIPQQQEQQQQQQQQQQQQQQQQQQQ), 60–269 (QQQQ…SNKL), 322–458 (SISN…SDFN), 545–717 (QNSS…KSSQ), 749–783 (LKNSPFPPSSPILSPQTDDPNNNNNNNNSNTTISQ), 798–830 (AFYNSGSNNNNNNNNNNNNNNNNNNNNTNSTSA), 842–956 (TTQI…KSVF), 972–997 (NSHHHHNSGNNSSNSNNNNNDDEVPT), 1081–1151 (ITSA…CNVN), 1179–1305 (KNNC…PSKQ), 1318–1343 (ALDSTNNNNNNNNDTDSTSSNMGTPT), and 1355–1459 (QHSR…ECWK). Composition is skewed to low complexity over residues 19–47 (QQQQIPQQQEQQQQQQQQQQQQQQQQQQQ), 60–85 (QQQQEQQNNNNNINDNINGNNNSNEI), 92–105 (NITNNNGTSIIISL), and 112–237 (ALNS…NNNN). Positions 238 to 256 (KQMTPPTFKNNLQVKHQPQ) are enriched in polar residues. 4 stretches are compositionally biased toward low complexity: residues 257-269 (SSSGGSIGGSNKL), 322-341 (SISNTTNETTTTTTTTTNTT), 348-451 (GSIG…NNGV), and 546-572 (NSSLNINNNNNSSNNNNINNNNNNNNI). The segment covering 573–582 (MAGSTSSVIY) has biased composition (polar residues). Residues 591-627 (NENNNNNINNDNTVCNINNNNNSNNNKSNNSNNSNNS) show a composition bias toward low complexity. A compositionally biased stretch (acidic residues) spans 633-643 (SSDEEPETDSD). Low complexity-rich tracts occupy residues 674–697 (NNTNTNTNTHNTYNNNKNNNNNNT), 759–778 (PILSPQTDDPNNNNNNNNSN), 805–824 (NNNNNNNNNNNNNNNNNNNN), 847–885 (TSDIDTSNSDNNNNNNNNNTSDNNFNDYNNDYNNDYNNY), 902–956 (TKMS…KSVF), 979–990 (SGNNSSNSNNNN), 1081–1149 (ITSA…CTCN), and 1180–1262 (NNCT…SNNN). Residues 1263-1273 (NHHHHHHHHHN) show a composition bias toward basic residues. Composition is skewed to low complexity over residues 1288-1303 (SSSSSPWSSPALSSPS), 1320-1338 (DSTNNNNNNNNDTDSTSSN), 1359-1386 (NNSSNNQNNNNINNNNNNNNNNNNNNNN), and 1393-1454 (SNST…MNSN). Positions 1476 to 1744 (LFLIKKIGAG…AITSLYDDYI (269 aa)) constitute a Protein kinase domain. Residues 1482-1490 (IGAGSFSKV) and lysine 1503 contribute to the ATP site. Catalysis depends on aspartate 1597, which acts as the Proton acceptor.

The protein belongs to the protein kinase superfamily. TKL Ser/Thr protein kinase family.

It carries out the reaction L-seryl-[protein] + ATP = O-phospho-L-seryl-[protein] + ADP + H(+). It catalyses the reaction L-threonyl-[protein] + ATP = O-phospho-L-threonyl-[protein] + ADP + H(+). This is Probable serine/threonine-protein kinase DDB_G0282963 from Dictyostelium discoideum (Social amoeba).